An 887-amino-acid polypeptide reads, in one-letter code: Alanine--tRNA ligase (887 aa).

Zn(2+) is bound by residues His579, His583, Cys681, and His685.

This sequence belongs to the class-II aminoacyl-tRNA synthetase family. Zn(2+) serves as cofactor.

Its subcellular location is the cytoplasm. The enzyme catalyses tRNA(Ala) + L-alanine + ATP = L-alanyl-tRNA(Ala) + AMP + diphosphate. Its function is as follows. Catalyzes the attachment of alanine to tRNA(Ala) in a two-step reaction: alanine is first activated by ATP to form Ala-AMP and then transferred to the acceptor end of tRNA(Ala). Also edits incorrectly charged Ser-tRNA(Ala) and Gly-tRNA(Ala) via its editing domain. This Flavobacterium psychrophilum (strain ATCC 49511 / DSM 21280 / CIP 103535 / JIP02/86) protein is Alanine--tRNA ligase.